The chain runs to 149 residues: Large ribosomal subunit protein bL9 (149 aa).

It belongs to the bacterial ribosomal protein bL9 family.

Binds to the 23S rRNA. The protein is Large ribosomal subunit protein bL9 of Thiobacillus denitrificans (strain ATCC 25259 / T1).